Here is a 435-residue protein sequence, read N- to C-terminus: UDP-N-acetylmuramate--L-alanine ligase (435 aa).

108–114 (GSHGKTS) is an ATP binding site.

Belongs to the MurCDEF family.

The protein resides in the cytoplasm. The enzyme catalyses UDP-N-acetyl-alpha-D-muramate + L-alanine + ATP = UDP-N-acetyl-alpha-D-muramoyl-L-alanine + ADP + phosphate + H(+). It functions in the pathway cell wall biogenesis; peptidoglycan biosynthesis. In terms of biological role, cell wall formation. This Shouchella clausii (strain KSM-K16) (Alkalihalobacillus clausii) protein is UDP-N-acetylmuramate--L-alanine ligase.